Reading from the N-terminus, the 171-residue chain is Squamosa promoter-binding protein 2 (171 aa).

Disordered regions lie at residues 20–46 (GDEG…VVKV) and 57–76 (KLNL…TASG). Over residues 22 to 40 (EGSDFEEEEEGEDEEEEEQ) the composition is skewed to acidic residues. The SBP-type zinc-finger motif lies at 82-159 (QPCCLVENCG…AGHNERRRKS (78 aa)). 8 residues coordinate Zn(2+): Cys85, Cys90, Cys107, His110, Cys126, Cys129, His133, and Cys145. A Bipartite nuclear localization signal motif is present at residues 142 to 158 (KRSCRRRLAGHNERRRK). Residues 149–158 (LAGHNERRRK) show a composition bias toward basic residues. Residues 149–171 (LAGHNERRRKSSLESHKEGRSPR) are disordered. Positions 159–171 (SSLESHKEGRSPR) are enriched in basic and acidic residues.

Its subcellular location is the nucleus. Functionally, probable transcriptional factor. Binds to the promoter of the SQUAMOSA gene. The polypeptide is Squamosa promoter-binding protein 2 (SBP2) (Antirrhinum majus (Garden snapdragon)).